A 224-amino-acid chain; its full sequence is N-terminal Xaa-Pro-Lys N-methyltransferase 1-A (224 aa).

Residues Gly70, Arg75, 92-94 (DVT), 120-121 (LQ), and Gln136 contribute to the S-adenosyl-L-methionine site.

This sequence belongs to the methyltransferase superfamily. NTM1 family.

Its subcellular location is the nucleus. The catalysed reaction is N-terminal L-alanyl-L-prolyl-L-lysyl-[protein] + 3 S-adenosyl-L-methionine = N-terminal N,N,N-trimethyl-L-alanyl-L-prolyl-L-lysyl-[protein] + 3 S-adenosyl-L-homocysteine + 3 H(+). The enzyme catalyses N-terminal L-seryl-L-prolyl-L-lysyl-[protein] + 3 S-adenosyl-L-methionine = N-terminal N,N,N-trimethyl-L-seryl-L-prolyl-L-lysyl-[protein] + 3 S-adenosyl-L-homocysteine + 3 H(+). It carries out the reaction N-terminal L-prolyl-L-prolyl-L-lysyl-[protein] + 2 S-adenosyl-L-methionine = N-terminal N,N-dimethyl-L-prolyl-L-prolyl-L-lysyl-[protein] + 2 S-adenosyl-L-homocysteine + 2 H(+). Functionally, distributive alpha-N-methyltransferase that methylates the N-terminus of target proteins containing the N-terminal motif [Ala/Gly/Pro/Ser]-Pro-Lys when the initiator Met is cleaved. Specifically catalyzes mono-, di- or tri-methylation of the exposed alpha-amino group of the Ala, Gly or Ser residue in the [Ala/Gly/Ser]-Pro-Lys motif and mono- or di-methylation of Pro in the Pro-Pro-Lys motif. Required during mitosis for normal bipolar spindle formation and chromosome segregation via its action on target proteins. The chain is N-terminal Xaa-Pro-Lys N-methyltransferase 1-A (ntmt1-a) from Xenopus laevis (African clawed frog).